Here is a 118-residue protein sequence, read N- to C-terminus: Large ribosomal subunit protein bL20 (118 aa).

This sequence belongs to the bacterial ribosomal protein bL20 family.

Its function is as follows. Binds directly to 23S ribosomal RNA and is necessary for the in vitro assembly process of the 50S ribosomal subunit. It is not involved in the protein synthesizing functions of that subunit. The polypeptide is Large ribosomal subunit protein bL20 (Psychromonas ingrahamii (strain DSM 17664 / CCUG 51855 / 37)).